The primary structure comprises 712 residues: Effector protein HopM1 (712 aa).

A disordered region spans residues 22–58 (DTVPAQTAHPNAVTAGMNPPLTPDQSGSHATESSSAG). Polar residues predominate over residues 44–57 (PDQSGSHATESSSA).

As to quaternary structure, interacts with the chaperone ShcM. Interacts with host plant BIG5/ATMIN7.

It localises to the secreted. The protein localises to the host membrane. Functionally, involved in the suppression of basal resistance and promotion of disease symptoms in plants. Mediates the ubiquitination and degradation, via the host proteasome, of a low-abundance immunity-associated protein in Arabidopsis thaliana. May be involved in the inhibition of a host vesicle trafficking pathway. The protein is Effector protein HopM1 (hopM1) of Pseudomonas syringae pv. tomato (strain ATCC BAA-871 / DC3000).